A 490-amino-acid polypeptide reads, in one-letter code: Chromosomal replication initiator protein DnaA (490 aa).

The tract at residues 1–75 is domain I, interacts with DnaA modulators; the sequence is MAVSSDAEQK…SELWKQEDAD (75 aa). The interval 75-145 is domain II; the sequence is DLLKIEIVVR…SEFRHNVLGS (71 aa). The segment at 146-368 is domain III, AAA+ region; that stretch reads PLDPRYTFGS…GAFNQLLFRQ (223 aa). G192, G194, K195, and T196 together coordinate ATP. The segment at 369 to 490 is domain IV, binds dsDNA; the sequence is SFEPQITIDR…LLRRLINDQA (122 aa).

This sequence belongs to the DnaA family. In terms of assembly, oligomerizes as a right-handed, spiral filament on DNA at oriC.

The protein localises to the cytoplasm. Its function is as follows. Plays an essential role in the initiation and regulation of chromosomal replication. ATP-DnaA binds to the origin of replication (oriC) to initiate formation of the DNA replication initiation complex once per cell cycle. Binds the DnaA box (a 9 base pair repeat at the origin) and separates the double-stranded (ds)DNA. Forms a right-handed helical filament on oriC DNA; dsDNA binds to the exterior of the filament while single-stranded (ss)DNA is stabiized in the filament's interior. The ATP-DnaA-oriC complex binds and stabilizes one strand of the AT-rich DNA unwinding element (DUE), permitting loading of DNA polymerase. After initiation quickly degrades to an ADP-DnaA complex that is not apt for DNA replication. Binds acidic phospholipids. The chain is Chromosomal replication initiator protein DnaA from Mesorhizobium japonicum (strain LMG 29417 / CECT 9101 / MAFF 303099) (Mesorhizobium loti (strain MAFF 303099)).